Reading from the N-terminus, the 282-residue chain is Putative hydrolase Bcenmc03_4750 (282 aa).

Residues glutamate 124, glutamate 126, and aspartate 155 each coordinate Mg(2+).

This sequence belongs to the FAH family. Mg(2+) is required as a cofactor.

This chain is Putative hydrolase Bcenmc03_4750, found in Burkholderia orbicola (strain MC0-3).